A 956-amino-acid polypeptide reads, in one-letter code: DNA repair endonuclease UVH1 (956 aa).

The short motif at 256 to 272 is the Nuclear localization signal element; it reads RRQLDPIWHTLGKRTKQ. 3 disordered regions span residues 343 to 363, 516 to 593, and 697 to 718; these read HVKNKSGKKRNSKGETDSVEA, TTDM…RPSG, and SSTEFPASSTQNSLTRKAGGRK. Polar residues predominate over residues 697-711; it reads SSTEFPASSTQNSLT. The ERCC4 domain maps to 725 to 805; it reads QVIVDMREFM…IPVLLIEFSQ (81 aa).

Belongs to the XPF family. As to quaternary structure, heterodimer with ERCC1/RAD10. Isoform 1 and isoform 2 are widely expressed, predominantly in flowers, meristems and stems. Isoform 3 is detected at low levels.

The protein resides in the nucleus. Its function is as follows. Seems to be involved in nucleotide excision repair (NER) of damaged DNA (dark repair mechanism). Involved in repair of UV light, and probably oxidative damage. The UVH1/RAD1-ERCC1/RAD10 complex may act as an endonuclease making DNA incision 5' to the lesion site. In vitro, is implicated in double strand breaks (DSBs) repair and is required for homologous recombination in the presence of non-homologous overhangs. May mediate the induction of a DNA-damage sensitive cell-cycle checkpoint during the G2 phase. The polypeptide is DNA repair endonuclease UVH1 (UVH1) (Arabidopsis thaliana (Mouse-ear cress)).